The chain runs to 156 residues: Small ribosomal subunit protein uS7 (156 aa).

This sequence belongs to the universal ribosomal protein uS7 family. As to quaternary structure, part of the 30S ribosomal subunit. Contacts proteins S9 and S11.

In terms of biological role, one of the primary rRNA binding proteins, it binds directly to 16S rRNA where it nucleates assembly of the head domain of the 30S subunit. Is located at the subunit interface close to the decoding center, probably blocks exit of the E-site tRNA. The protein is Small ribosomal subunit protein uS7 of Thermoanaerobacter sp. (strain X514).